A 376-amino-acid chain; its full sequence is DnaJ homolog subfamily B member 12 (376 aa).

Position 1 is an N-acetylmethionine (Met-1). The segment at 45–97 (ALIESLNQKPQSTGDHPQPTDTTHTTTKKAGGTETPSANGEAGGGESAKGYTS) is disordered. Residues 57-84 (TGDHPQPTDTTHTTTKKAGGTETPSANG) are compositionally biased toward low complexity. A J domain is found at 111-175 (DYYEILGVSR…EKRKQYDQFG (65 aa)). A Pros-methylhistidine modification is found at His-186. A helical transmembrane segment spans residues 243 to 263 (GGLGVFVQLMPILILILVSAL).

It belongs to the DnaJ family. DNAJB12/DNAJB14 subfamily. In terms of assembly, homodimer and homotetramer. Interacts (via J domain) with HSPA8/Hsc70. Forms a multiprotein complex, at least composed of DNAJB12, DNAJB14, HSPA8/Hsc70 and SGTA; interaction with DNAJB14 and HSPA8/Hsc70 is direct. Methylated at His-186 by METTL9.

It is found in the endoplasmic reticulum membrane. The protein resides in the nucleus membrane. Functionally, acts as a co-chaperone with HSPA8/Hsc70; required to promote protein folding and trafficking, prevent aggregation of client proteins, and promote unfolded proteins to endoplasmic reticulum-associated degradation (ERAD) pathway. Acts by determining HSPA8/Hsc70's ATPase and polypeptide-binding activities. Can also act independently of HSPA8/Hsc70: together with DNAJB14, acts as a chaperone that promotes maturation of potassium channels KCND2 and KCNH2 by stabilizing nascent channel subunits and assembling them into tetramers. While stabilization of nascent channel proteins is dependent on HSPA8/Hsc70, the process of oligomerization of channel subunits is independent of HSPA8/Hsc70. When overexpressed, forms membranous structures together with DNAJB14 and HSPA8/Hsc70 within the nucleus; the role of these structures, named DJANGOs, is still unclear. This chain is DnaJ homolog subfamily B member 12, found in Mus musculus (Mouse).